The sequence spans 224 residues: MPGRAPLRTVPGALGAWLLGGLWAWTLCGLCSLGAVGAPRPCQAPQQWEGRQVMYQQSSGRNSRALLSYDGLNQRVRVLDERKALIPCKRLFEYILLYKDGVMFQIDQATKQCSKMTLTQPWDPLDIPQNSTFEDQYSIGGPQEQITVQEWSDRKSARSYETWIGIYTVKDCYPVQETFTINYSVILSTRFFDIQLGIKDPSVFTPPSTCQMAQLEKMSEDCSW.

Residues 1-37 form the signal peptide; the sequence is MPGRAPLRTVPGALGAWLLGGLWAWTLCGLCSLGAVG. Intrachain disulfides connect C42–C172, C88–C222, and C113–C210. N-linked (GlcNAc...) asparagine glycans are attached at residues N130 and N182.

The protein belongs to the ependymin family. As to quaternary structure, homodimer. In terms of processing, N-glycosylated; the glycan contains mannose-6-phosphate moieties. Ubiquitous. Detected in brain, heart, skeletal muscle, kidney, testis, ovary and prostate.

It is found in the lysosome lumen. Its subcellular location is the secreted. Functionally, binds anionic lipids and gangliosides at acidic pH. The sequence is that of Mammalian ependymin-related protein 1 (EPDR1) from Homo sapiens (Human).